The following is a 488-amino-acid chain: Dipeptide and tripeptide permease A (488 aa).

Over 1-35 the chain is Cytoplasmic; it reads MSTANTPEDEQKPSLNAFKQPRAFYLIFSIELWER. Residues 36 to 56 traverse the membrane as a helical segment; the sequence is FGYYGLQGIMAVYLVKMLGMS. Topologically, residues 57-60 are periplasmic; the sequence is EAEA. The chain crosses the membrane as a helical span at residues 61–81; the sequence is ITVFAAFTALVYGFVAIGGWL. Topologically, residues 82 to 90 are cytoplasmic; it reads GDKILGTKR. A helical membrane pass occupies residues 91–111; sequence VIVLGAIVLAIGYAMVAFSDH. At 112 to 114 the chain is on the periplasmic side; the sequence is DKD. Residues 115 to 135 traverse the membrane as a helical segment; the sequence is MIYWGLATIAVGNGLFKANPS. Residues 136 to 154 lie on the Cytoplasmic side of the membrane; that stretch reads SLLATCYEKDDPQLDGAFT. The helical transmembrane segment at 155–175 threads the bilayer; the sequence is MYYMSINVGSFLSMLATPWLA. Residues 176–179 lie on the Periplasmic side of the membrane; sequence ANYG. Residues 180-200 form a helical membrane-spanning segment; that stretch reads WDVAFALSVVGMLITLANFML. Topologically, residues 201-219 are cytoplasmic; sequence CRGWIKDKGSRPDFEPLNY. The helical transmembrane segment at 220–240 threads the bilayer; sequence LKLLLTLVGIVALTAVSTWLL. Position 241 (H241) is a topological domain, periplasmic. Residues 242–262 traverse the membrane as a helical segment; that stretch reads NNEVATWSLAIISLGIILIFA. Residues 263–275 lie on the Cytoplasmic side of the membrane; that stretch reads RETFMMKGVARRK. The helical transmembrane segment at 276-296 threads the bilayer; it reads MIVAFLLMVEAVVFFVLYDQM. At 297–324 the chain is on the periplasmic side; the sequence is PTSLNFFAIHNVEHAILGFSVEPEQFQS. A helical membrane pass occupies residues 325–345; sequence LNPFWIMLASPLLAAIYNFMG. The Cytoplasmic portion of the chain corresponds to 346 to 353; sequence DKLPMPYK. Residues 354–374 form a helical membrane-spanning segment; that stretch reads FTVGMFLSATAFLVLPLGASM. The Periplasmic portion of the chain corresponds to 375 to 391; sequence ANEAGIVSSWWLVASYG. Residues 392-412 form a helical membrane-spanning segment; it reads FQSIGELMISGLGLAMVAQLV. Residues 413 to 415 lie on the Cytoplasmic side of the membrane; sequence PQR. A helical membrane pass occupies residues 416–436; it reads LMGFIMGAWFLTSAAAAIIAG. Over 437–460 the chain is Periplasmic; sequence KVASLMAVPEDVQNAHASLEIYSS. The chain crosses the membrane as a helical span at residues 461–481; that stretch reads VFLQIGIVTGVIALLMLFTAP. At 482–488 the chain is on the cytoplasmic side; that stretch reads MLSKMTQ.

The protein belongs to the major facilitator superfamily. Proton-dependent oligopeptide transporter (POT/PTR) (TC 2.A.17) family. DtpA subfamily.

Its subcellular location is the cell inner membrane. Proton-dependent permease that transports di- and tripeptides. This Proteus mirabilis (strain HI4320) protein is Dipeptide and tripeptide permease A.